The following is a 400-amino-acid chain: S-adenosylmethionine synthase (400 aa).

Histidine 17 is an ATP binding site. Aspartate 19 is a Mg(2+) binding site. Glutamate 45 lines the K(+) pocket. Residues glutamate 58 and glutamine 101 each contribute to the L-methionine site. The interval glutamine 101–glutamine 111 is flexible loop. ATP is bound by residues aspartate 177 to lysine 179, arginine 244 to phenylalanine 245, aspartate 253, arginine 259 to lysine 260, alanine 276, and lysine 280. Aspartate 253 lines the L-methionine pocket. Lysine 284 is a binding site for L-methionine.

This sequence belongs to the AdoMet synthase family. As to quaternary structure, homotetramer; dimer of dimers. Requires Mg(2+) as cofactor. K(+) serves as cofactor.

Its subcellular location is the cytoplasm. The catalysed reaction is L-methionine + ATP + H2O = S-adenosyl-L-methionine + phosphate + diphosphate. Its pathway is amino-acid biosynthesis; S-adenosyl-L-methionine biosynthesis; S-adenosyl-L-methionine from L-methionine: step 1/1. In terms of biological role, catalyzes the formation of S-adenosylmethionine (AdoMet) from methionine and ATP. The overall synthetic reaction is composed of two sequential steps, AdoMet formation and the subsequent tripolyphosphate hydrolysis which occurs prior to release of AdoMet from the enzyme. This chain is S-adenosylmethionine synthase, found in Bacillus velezensis (strain DSM 23117 / BGSC 10A6 / LMG 26770 / FZB42) (Bacillus amyloliquefaciens subsp. plantarum).